The sequence spans 386 residues: N-acetylneuraminate epimerase (386 aa).

The first 29 residues, 1–29 (MGMQMKNFKKMMTLMALCFSVAITTSGYA), serve as a signal peptide directing secretion. Kelch repeat units follow at residues 51–95 (VIYV…VFLN), 97–149 (ELYV…VKLN), 151–186 (TMVL…KVIY), 187–232 (NYFN…VMGN), 235–284 (LMLI…LAGA), 306–355 (QNYT…SYGD), and 357–386 (VFLI…LLIK). Glu241 serves as the catalytic Proton acceptor.

Belongs to the NanM family. In terms of assembly, homodimer.

It is found in the periplasm. It carries out the reaction N-acetyl-alpha-neuraminate = N-acetyl-beta-neuraminate. Functionally, converts alpha-N-acetylneuranimic acid (Neu5Ac) to the beta-anomer, accelerating the equilibrium between the alpha- and beta-anomers. Probably facilitates sialidase-negative bacteria to compete successfully for limited amounts of extracellular Neu5Ac, which is likely taken up in the beta-anomer. In addition, the rapid removal of sialic acid from solution might be advantageous to the bacterium to damp down host responses. This chain is N-acetylneuraminate epimerase, found in Salmonella typhimurium (strain LT2 / SGSC1412 / ATCC 700720).